The primary structure comprises 247 residues: Cell division protein ZapD (247 aa).

It belongs to the ZapD family. Interacts with FtsZ.

It is found in the cytoplasm. Functionally, cell division factor that enhances FtsZ-ring assembly. Directly interacts with FtsZ and promotes bundling of FtsZ protofilaments, with a reduction in FtsZ GTPase activity. This is Cell division protein ZapD from Escherichia coli O7:K1 (strain IAI39 / ExPEC).